A 338-amino-acid polypeptide reads, in one-letter code: Erlin-2 (338 aa).

Topologically, residues 1-3 (MAQ) are cytoplasmic. A helical membrane pass occupies residues 4–24 (LGAVVAVAASFFCASLFSAVH). At 25–338 (KIEEGHIGVY…DEPMEADSEN (314 aa)) the chain is on the lumenal side. Asn106 carries an N-linked (GlcNAc...) asparagine glycan. The segment at 177-309 (EAIRRNYELM…DIPNMFMDSA (133 aa)) is interaction with ERLIN1. The residue at position 267 (Lys267) is an N6-acetyllysine.

This sequence belongs to the band 7/mec-2 family. In terms of assembly, forms a heteromeric complex with ERLIN1. In complex with ERLIN1, interacts with RNF170. Interacts with activated ITPR1, independently of the degree of ITPR1 polyubiquitination. Interacts with SCAP, INSIG1, SREBF1 and SREBF2 under cholesterol sufficiency conditions; indicative for an association with the SCAP-SREBP-INSIG complex. Probably part of an AMFR/gp78 and INSIG1-containing ubiquitin ligase complex involved in ERAD of HMGCR. Interacts with TMUB1; TMUB1 bridges the association with AMFR. Interacts with SYVN1 and RNF139. Interacts with TMEM259. Interacts with TMEM41B. In terms of processing, deubiquitinated by USP25; leading to stabilization.

It localises to the endoplasmic reticulum membrane. Its function is as follows. Component of the ERLIN1/ERLIN2 complex which mediates the endoplasmic reticulum-associated degradation (ERAD) of inositol 1,4,5-trisphosphate receptors (IP3Rs) such as ITPR1. Promotes sterol-accelerated ERAD of HMGCR probably implicating an AMFR/gp78-containing ubiquitin ligase complex. Involved in regulation of cellular cholesterol homeostasis by regulation the SREBP signaling pathway. May promote ER retention of the SCAP-SREBF complex. The chain is Erlin-2 (ERLIN2) from Bos taurus (Bovine).